The chain runs to 688 residues: G protein-coupled receptor kinase 3 (688 aa).

The interval 1–190 (MADLEAVLAD…ELNIHLSMND (190 aa)) is N-terminal. An RGS domain is found at 54-175 (TFDKIFNQKI…MESDKFTRFC (122 aa)). Residues 191-453 (FSVHRIIGRG…ARELKEHIFF (263 aa)) enclose the Protein kinase domain. Residues 197 to 205 (IGRGGFGEV) and lysine 220 each bind ATP. The Proton acceptor role is filled by aspartate 317. The AGC-kinase C-terminal domain maps to 454–521 (KGIDWQHVYL…VISERWQQEV (68 aa)). The region spanning 558–652 (DCIMHGYMLK…WLKELTCTFN (95 aa)) is the PH domain.

This sequence belongs to the protein kinase superfamily. AGC Ser/Thr protein kinase family. GPRK subfamily. In terms of assembly, interacts with GIT1. Ubiquitinated.

It localises to the postsynapse. It is found in the presynapse. The enzyme catalyses [beta-adrenergic receptor] + ATP = [beta-adrenergic receptor]-phosphate + ADP + H(+). Specifically phosphorylates the agonist-occupied form of the beta-adrenergic and closely related receptors. This is G protein-coupled receptor kinase 3 from Mus musculus (Mouse).